A 96-amino-acid chain; its full sequence is UPF0235 protein VIBHAR_03581 (96 aa).

Belongs to the UPF0235 family.

The chain is UPF0235 protein VIBHAR_03581 from Vibrio campbellii (strain ATCC BAA-1116).